The primary structure comprises 368 residues: Protein Wnt-1 (368 aa).

The signal sequence occupies residues 1-25 (MRGPALLLALRALCALSALRGTARA). 11 disulfide bridges follow: C91–C102, C141–C149, C151–C168, C216–C230, C218–C225, C297–C328, C313–C323, C327–C367, C343–C358, C345–C355, and C350–C351. The O-palmitoleoyl serine; by PORCN moiety is linked to residue S222.

The protein belongs to the Wnt family. Forms a soluble 1:1 complex with AFM; this prevents oligomerization and is required for prolonged biological activity. The complex with AFM may represent the physiological form in body fluids. Interacts with PORCN. N-glycosylated. N-glycosylation favors subsequent palmitoleoylation. Post-translationally, palmitoleoylation is required for efficient binding to frizzled receptors. Palmitoleoylation is necessary for proper trafficking to cell surface. Depalmitoleoylated by NOTUM, leading to inhibit Wnt signaling pathway.

It localises to the secreted. The protein localises to the extracellular space. The protein resides in the extracellular matrix. Ligand for members of the frizzled family of seven transmembrane receptors. Acts in the canonical Wnt signaling pathway by promoting beta-catenin-dependent transcriptional activation. Developmental protein that promotes cell proliferation in the developing spinal cord. Has a role in osteoblast function, bone development and bone homeostasis. This chain is Protein Wnt-1 (WNT1), found in Gallus gallus (Chicken).